The following is a 36-amino-acid chain: MTIEKHERSTKDLVKAAVSGWLGTALEFMDFKSHAC.

In Escherichia coli (strain K12), this protein is Protein YnfP.